A 786-amino-acid polypeptide reads, in one-letter code: Wall-associated receptor kinase-like 17 (786 aa).

The N-terminal stretch at 1-30 (MSYKNTNNSHLILFKLLLLLILYSADLTAS) is a signal peptide. The Extracellular portion of the chain corresponds to 31–369 (SSCRSECGGC…YRCVGDKTKA (339 aa)). 5 N-linked (GlcNAc...) asparagine glycosylation sites follow: N69, N122, N160, N165, and N274. Residues 301–362 (CICDYTMSII…CVNFEGGYRC (62 aa)) form an atypical EGF-like region. Disulfide bonds link C303-C318, C340-C353, and C347-C362. Residues 370 to 390 (IMIGAGTGFGVLVLVGGVWWL) traverse the membrane as a helical segment. The Cytoplasmic segment spans residues 391–786 (RKFLVKRRMA…VEPLNPLLTW (396 aa)). T433 carries the post-translational modification Phosphothreonine. One can recognise a Protein kinase domain in the interval 444–719 (FSENRVLGHG…REVFTELERI (276 aa)). ATP contacts are provided by residues 450-458 (LGHGGQGTV) and K472. Y517 is modified (phosphotyrosine). The active-site Proton acceptor is the D570. 2 positions are modified to phosphothreonine: T604 and T609. Y617 carries the phosphotyrosine modification. The span at 766-775 (SSIVASPPSS) shows a compositional bias: low complexity. The tract at residues 766-786 (SSIVASPPSSDVEPLNPLLTW) is disordered.

Belongs to the protein kinase superfamily. Ser/Thr protein kinase family.

The protein resides in the membrane. It carries out the reaction L-seryl-[protein] + ATP = O-phospho-L-seryl-[protein] + ADP + H(+). The enzyme catalyses L-threonyl-[protein] + ATP = O-phospho-L-threonyl-[protein] + ADP + H(+). Its function is as follows. Serine/threonine-protein kinase that may function as a signaling receptor of extracellular matrix component. This Arabidopsis thaliana (Mouse-ear cress) protein is Wall-associated receptor kinase-like 17 (WAKL17).